A 305-amino-acid polypeptide reads, in one-letter code: UDP-3-O-acyl-N-acetylglucosamine deacetylase (305 aa).

Zn(2+) contacts are provided by H79, H238, and D242. H265 serves as the catalytic Proton donor.

The protein belongs to the LpxC family. Zn(2+) serves as cofactor.

The catalysed reaction is a UDP-3-O-[(3R)-3-hydroxyacyl]-N-acetyl-alpha-D-glucosamine + H2O = a UDP-3-O-[(3R)-3-hydroxyacyl]-alpha-D-glucosamine + acetate. It participates in glycolipid biosynthesis; lipid IV(A) biosynthesis; lipid IV(A) from (3R)-3-hydroxytetradecanoyl-[acyl-carrier-protein] and UDP-N-acetyl-alpha-D-glucosamine: step 2/6. Its function is as follows. Catalyzes the hydrolysis of UDP-3-O-myristoyl-N-acetylglucosamine to form UDP-3-O-myristoylglucosamine and acetate, the committed step in lipid A biosynthesis. In Vibrio atlanticus (strain LGP32) (Vibrio splendidus (strain Mel32)), this protein is UDP-3-O-acyl-N-acetylglucosamine deacetylase.